The chain runs to 699 residues: DnaJ homolog subfamily C member 14 (699 aa).

The disordered stretch occupies residues 1–230 (MAQKHPGEGG…RHRLGRKRSQ (230 aa)). Residues 75–84 (HGPPRGPGPP) are compositionally biased toward pro residues. A compositionally biased stretch (acidic residues) spans 86 to 102 (AEEDPDQSEASSEESGV). Over residues 117–133 (DGNSSFLSIPSTCNCQG) the composition is skewed to polar residues. Over residues 163 to 176 (GEDEELEGEYDEEE) the composition is skewed to acidic residues. Over residues 203-218 (PAKEDTREGGRRDPRS) the composition is skewed to basic and acidic residues. Basic residues predominate over residues 219–228 (PGRHRLGRKR). The next 3 helical transmembrane spans lie at 251 to 271 (AGFW…ETCG), 301 to 321 (GWAQ…AGLF), and 327 to 347 (LVGA…QLGW). In terms of domain architecture, J spans 444–508 (NPFHVLGVEA…ERRKEYEMKR (65 aa)). The tract at residues 655–699 (MSNGNFFAAPQPGPGATAASKPNSTVPKGEAKPKRRKKVRRPFQR) is disordered. Over residues 662–673 (AAPQPGPGATAA) the composition is skewed to low complexity. Basic residues predominate over residues 687 to 699 (PKRRKKVRRPFQR).

In terms of assembly, interacts with the FxxxFxxxF motif of DRD1 via its C-terminal domain. Interacts with pestivirus nonstructural protein NS2.

The protein localises to the endoplasmic reticulum membrane. Regulates the export of target proteins, such as DRD1, from the endoplasmic reticulum to the cell surface. Promotes cleavage of pestivirus polyprotein. The chain is DnaJ homolog subfamily C member 14 (DNAJC14) from Bos taurus (Bovine).